A 586-amino-acid chain; its full sequence is Arginine--tRNA ligase (586 aa).

Residues 128 to 138 (ANPTGPLHVGH) carry the 'HIGH' region motif.

This sequence belongs to the class-I aminoacyl-tRNA synthetase family. In terms of assembly, monomer.

The protein resides in the cytoplasm. It catalyses the reaction tRNA(Arg) + L-arginine + ATP = L-arginyl-tRNA(Arg) + AMP + diphosphate. This Legionella pneumophila (strain Corby) protein is Arginine--tRNA ligase.